We begin with the raw amino-acid sequence, 385 residues long: Heat-inducible transcription repressor HrcA (385 aa).

This sequence belongs to the HrcA family.

In terms of biological role, negative regulator of class I heat shock genes (grpE-dnaK-dnaJ and groELS operons). Prevents heat-shock induction of these operons. The sequence is that of Heat-inducible transcription repressor HrcA from Protochlamydia amoebophila (strain UWE25).